The chain runs to 384 residues: 1-deoxy-D-xylulose 5-phosphate reductoisomerase (384 aa).

Residues Thr11, Gly12, Ser13, Ile14, Lys38, and Asn123 each contribute to the NADPH site. A 1-deoxy-D-xylulose 5-phosphate-binding site is contributed by Lys124. Glu125 provides a ligand contact to NADPH. Asp148 provides a ligand contact to Mn(2+). Ser149, Glu150, Ser174, and His197 together coordinate 1-deoxy-D-xylulose 5-phosphate. Mn(2+) is bound at residue Glu150. Gly203 lines the NADPH pocket. 4 residues coordinate 1-deoxy-D-xylulose 5-phosphate: Ser210, Asn215, Lys216, and Glu219. Mn(2+) is bound at residue Glu219.

Belongs to the DXR family. Mg(2+) serves as cofactor. The cofactor is Mn(2+).

The catalysed reaction is 2-C-methyl-D-erythritol 4-phosphate + NADP(+) = 1-deoxy-D-xylulose 5-phosphate + NADPH + H(+). It functions in the pathway isoprenoid biosynthesis; isopentenyl diphosphate biosynthesis via DXP pathway; isopentenyl diphosphate from 1-deoxy-D-xylulose 5-phosphate: step 1/6. Catalyzes the NADPH-dependent rearrangement and reduction of 1-deoxy-D-xylulose-5-phosphate (DXP) to 2-C-methyl-D-erythritol 4-phosphate (MEP). This Halothermothrix orenii (strain H 168 / OCM 544 / DSM 9562) protein is 1-deoxy-D-xylulose 5-phosphate reductoisomerase.